The sequence spans 1123 residues: Phytochrome 1 (1123 aa).

Residues 1 to 15 (MSTPKKTYSSTSSAK) show a composition bias toward low complexity. The disordered stretch occupies residues 1 to 20 (MSTPKKTYSSTSSAKSKAHS). Residues 216–395 (DIGLLCDTVV…VFGLQLNMEV (180 aa)) enclose the GAF domain. Residue C321 participates in phytochromobilin binding. PAS domains follow at residues 610–681 (VANE…LRGE) and 744–815 (DYKT…TKFM). The 221-residue stretch at 895 to 1115 (YIRQEIKNPL…VVNVELPMAQ (221 aa)) folds into the Histidine kinase domain.

It belongs to the phytochrome family. In terms of assembly, homodimer. In terms of processing, contains one covalently linked phytochromobilin chromophore.

Its subcellular location is the cytoplasm. Functionally, regulatory photoreceptor which exists in two forms that are reversibly interconvertible by light: the Pr form that absorbs maximally in the red region of the spectrum and the Pfr form that absorbs maximally in the far-red region. Photoconversion of Pr to Pfr induces an array of morphogenetic responses, whereas reconversion of Pfr to Pr cancels the induction of those responses. Pfr controls the expression of a number of nuclear genes including those encoding the small subunit of ribulose-bisphosphate carboxylase, chlorophyll A/B binding protein, protochlorophyllide reductase, rRNA, etc. It also controls the expression of its own gene(s) in a negative feedback fashion. Mediates chloroplast avoidance movement in cytoplasm. This is Phytochrome 1 (PHY1) from Physcomitrium patens (Spreading-leaved earth moss).